Reading from the N-terminus, the 940-residue chain is Glutamate receptor 2.9 (940 aa).

The N-terminal stretch at 1-23 is a signal peptide; the sequence is MKTNNTFLSYFVCGFLLMGVGLG. The Extracellular portion of the chain corresponds to 24 to 566; sequence QNQTSEIKVG…DTWVFLEPWS (543 aa). Residues Asn25, Asn39, Asn115, Asn338, Asn345, and Asn528 are each glycosylated (N-linked (GlcNAc...) asparagine). The helical transmembrane segment at 567–587 threads the bilayer; that stretch reads LELWVTTGCFFVFIGFVVWLF. The Cytoplasmic portion of the chain corresponds to 588–596; sequence EHRVNTDFR. A helical transmembrane segment spans residues 597–617; it reads GPPQYQIGTSLWFSFSTMVFA. The Cytoplasmic segment spans residues 618–628; it reads HRENVVSNLAR. The chain crosses the membrane as a helical span at residues 629–649; that stretch reads FVVVVWCFVVLVLTQSYTASL. Residues 650 to 811 are Extracellular-facing; sequence TSFLTVQSLQ…NRLNLSSFLG (162 aa). N-linked (GlcNAc...) asparagine glycans are attached at residues Asn771, Asn776, and Asn805. A helical transmembrane segment spans residues 812 to 832; the sequence is LFLIAGTAISFSLLVFVALFL. At 833–940 the chain is on the cytoplasmic side; it reads YEHRHTLGDD…ESDIECRVEQ (108 aa). Disordered stretches follow at residues 876 to 900 and 914 to 940; these read ISSPMTHKTPSPSTVQITPWPQSPS and PSEERFTTQPIIHHEDGESDIECRVEQ.

Belongs to the glutamate-gated ion channel (TC 1.A.10.1) family. May form heteromers. In terms of tissue distribution, expressed predominantly in roots.

It localises to the membrane. In terms of biological role, glutamate-gated receptor that probably acts as a non-selective cation channel. May be involved in light-signal transduction and calcium homeostasis via the regulation of calcium influx into cells. The polypeptide is Glutamate receptor 2.9 (GLR2.9) (Arabidopsis thaliana (Mouse-ear cress)).